The sequence spans 253 residues: MSEVSMRDLLKAGVHFGHQTRFWNPKMRKYIFGARNKIHIINLEHTVPALNDALRFVSNLAEKKNKILFVGTKRAAGKIIKEEADRANMPYVNHRWLGGMLTNYKTIRQSIRRYRDLETQSQDGTFDKLTKKEVLMLNREMDKLERSIGGIKDMGGLPDALFVIDVDHERIAIKEANKLGIPVIGVVDTNSDPDGVDYVIPGNDDAIRAIQVYAKAVADSCLHGLSSAAGNGDEFVEVNEAAASAEEAAEKSE.

Belongs to the universal ribosomal protein uS2 family.

This chain is Small ribosomal subunit protein uS2, found in Hahella chejuensis (strain KCTC 2396).